Here is a 579-residue protein sequence, read N- to C-terminus: Extracellular serine/threonine protein kinase FAM20C (579 aa).

Topologically, residues 1–10 (MKMILVRRFR) are cytoplasmic. The propeptide occupies 1 to 87 (MKMILVRRFR…PNKHTLRILQ (87 aa)). Residues 11–31 (VLILVVFLLACALHIAVDLLP) form a helical; Signal-anchor for type II membrane protein membrane-spanning segment. The Lumenal portion of the chain corresponds to 32–579 (KLDRRATRSS…ATEHRASTER (548 aa)). The disordered stretch occupies residues 38–79 (TRSSGEPGCSCAQPAAEAAGPGWAQARSRPGESAGGDAGWPN). Residues 49 to 63 (AQPAAEAAGPGWAQA) show a composition bias toward low complexity. N-linked (GlcNAc...) asparagine glycosylation occurs at N96. Residues 104–155 (KLPSAAEPVDHAPRGQEPRSPPPRDPAHRPLLRDPGPRPRVPPPGPSGDGSL) form a disordered region. Composition is skewed to basic and acidic residues over residues 111–120 (PVDHAPRGQE) and 128–140 (DPAH…DPGP). Residues Q264, K280, and E301 each contribute to the ATP site. E301 contributes to the Mn(2+) binding site. The segment at 349–560 (FVSPANNICF…AVRDCVEKDG (212 aa)) is kinase domain. 2 disulfides stabilise this stretch: C357-C373 and C362-C366. Position 384–387 (384–387 (AAFL)) interacts with ATP. Intrachain disulfides connect C421–C495 and C496–C555. Residue D453 is part of the active site. E458 and D473 together coordinate ATP. D473 contributes to the Mn(2+) binding site.

It belongs to the FAM20 family. In terms of assembly, homodimer; disulfide-linked. Interacts with FAM20A; probably forming a heterotetramer of 2 subunits of FAM20A and 2 subunits of FAM20C. Interacts with COPII components SEC23A and SEC24A; transport of FAM20C from the endoplasmic reticulum to the Golgi is likely to be mediated by COPII vesicles. Mn(2+) serves as cofactor. Post-translationally, N-glycosylation is required for folding. Autophosphorylated. In terms of processing, propeptide cleavage by MBTPS1/S1P promotes FAM20C secretion and maximal kinase activity which is essential for efficient osteoblast differentiation and biomineralization. In terms of tissue distribution, in the mammary gland, expressed at higher levels in lactating mice than in virgin mice (at protein level). Highly expressed in the tooth. No expression in the dental pulp. At the secretory stage of amelogenesis, it is detected in the matrix of the enamel, in the ameloblasts, and within the cells adjoining the stratum intermedium (a tissue layer analogous to the stellate reticulum seen in the developing molar). Strong expression is observed in maturation stage ameloblasts and throughout the non-cornified layers of the gingival epithelium. Expressed at moderate levels in bone and at low levels in kidney, liver, brain and lung. Very low expression, if any, in spleen and skeletal muscle.

It localises to the golgi apparatus membrane. Its subcellular location is the secreted. The protein resides in the endoplasmic reticulum. It carries out the reaction L-seryl-[protein] + ATP = O-phospho-L-seryl-[protein] + ADP + H(+). The catalysed reaction is L-threonyl-[protein] + ATP = O-phospho-L-threonyl-[protein] + ADP + H(+). With respect to regulation, serine/threonine protein kinase activity is increased upon interaction with FAM20A. Functionally, golgi serine/threonine protein kinase that phosphorylates secretory pathway proteins within Ser-x-Glu/pSer motifs and plays a key role in biomineralization of bones and teeth. Constitutes the main protein kinase for extracellular proteins, generating the majority of the extracellular phosphoproteome. Mainly phosphorylates proteins within the Ser-x-Glu/pSer motif, but also displays a broader substrate specificity. Phosphorylates ERO1A, enhancing its activity which is required to maintain endoplasmic reticulum redox homeostasis and for oxidative protein folding. During endoplasmic reticulum stress, phosphorylates P4HB/PDIA1 which induces a functional switch, causing P4HB to change from an oxidoreductase to a molecular chaperone. This is critical to maintain ER proteostasis and reduce cell death under ER stress. Phosphorylation of P4HB also promotes its interaction with ERN1, leading to reduced activity of ERN1, a key sensor for the endoplasmic reticulum unfolded protein response. Required for osteoblast differentiation and mineralization. Phosphorylates casein as well as a number of proteins involved in biomineralization such as AMELX, AMTN, ENAM and SPP1. In addition to its role in biomineralization, also plays a role in lipid homeostasis, wound healing and cell migration and adhesion. The polypeptide is Extracellular serine/threonine protein kinase FAM20C (Mus musculus (Mouse)).